The sequence spans 425 residues: L-cysteine:1D-myo-inositol 2-amino-2-deoxy-alpha-D-glucopyranoside ligase (425 aa).

C43 contributes to the Zn(2+) binding site. Residues 43–46 (CGIT), T58, and 81–83 (NVT) each bind L-cysteinyl-5'-AMP. The short motif at 45–55 (ITPYDATHIGH) is the 'HIGH' region element. Positions 195–200 (ERGGDP) match the 'ERGGDP' region motif. Residue W236 participates in L-cysteinyl-5'-AMP binding. C240 is a binding site for Zn(2+). 258–260 (GSD) is an L-cysteinyl-5'-AMP binding site. Zn(2+) is bound at residue H265. V295 is a binding site for L-cysteinyl-5'-AMP. The short motif at 301 to 305 (KMSKS) is the 'KMSKS' region element.

Belongs to the class-I aminoacyl-tRNA synthetase family. MshC subfamily. As to quaternary structure, monomer. It depends on Zn(2+) as a cofactor.

The enzyme catalyses 1D-myo-inositol 2-amino-2-deoxy-alpha-D-glucopyranoside + L-cysteine + ATP = 1D-myo-inositol 2-(L-cysteinylamino)-2-deoxy-alpha-D-glucopyranoside + AMP + diphosphate + H(+). Its function is as follows. Catalyzes the ATP-dependent condensation of GlcN-Ins and L-cysteine to form L-Cys-GlcN-Ins. The protein is L-cysteine:1D-myo-inositol 2-amino-2-deoxy-alpha-D-glucopyranoside ligase of Sanguibacter keddieii (strain ATCC 51767 / DSM 10542 / NCFB 3025 / ST-74).